Consider the following 425-residue polypeptide: Serine--tRNA ligase (425 aa).

Thr231–Glu233 provides a ligand contact to L-serine. ATP is bound at residue Arg262 to Glu264. An L-serine-binding site is contributed by Glu285. Residue Glu349 to Ser352 coordinates ATP. Ser385 serves as a coordination point for L-serine.

It belongs to the class-II aminoacyl-tRNA synthetase family. Type-1 seryl-tRNA synthetase subfamily. In terms of assembly, homodimer. The tRNA molecule binds across the dimer.

The protein localises to the cytoplasm. It carries out the reaction tRNA(Ser) + L-serine + ATP = L-seryl-tRNA(Ser) + AMP + diphosphate + H(+). The enzyme catalyses tRNA(Sec) + L-serine + ATP = L-seryl-tRNA(Sec) + AMP + diphosphate + H(+). Its pathway is aminoacyl-tRNA biosynthesis; selenocysteinyl-tRNA(Sec) biosynthesis; L-seryl-tRNA(Sec) from L-serine and tRNA(Sec): step 1/1. In terms of biological role, catalyzes the attachment of serine to tRNA(Ser). Is also able to aminoacylate tRNA(Sec) with serine, to form the misacylated tRNA L-seryl-tRNA(Sec), which will be further converted into selenocysteinyl-tRNA(Sec). The sequence is that of Serine--tRNA ligase from Desulfosudis oleivorans (strain DSM 6200 / JCM 39069 / Hxd3) (Desulfococcus oleovorans).